The following is a 203-amino-acid chain: RNA pyrophosphohydrolase (203 aa).

One can recognise a Nudix hydrolase domain in the interval 6 to 149; sequence GFRPNVGIIL…KRNVYQMALT (144 aa). The Nudix box signature appears at 38-59; it reads GGIKHGESPEQAMFRELHEEVG. Residues 170 to 203 are disordered; sequence RAHRRDEGSEHNDHLDPTGPHDAGASVSEPKQAE. Residues 173-185 are compositionally biased toward basic and acidic residues; the sequence is RRDEGSEHNDHLD.

It belongs to the Nudix hydrolase family. RppH subfamily. A divalent metal cation is required as a cofactor.

In terms of biological role, accelerates the degradation of transcripts by removing pyrophosphate from the 5'-end of triphosphorylated RNA, leading to a more labile monophosphorylated state that can stimulate subsequent ribonuclease cleavage. The polypeptide is RNA pyrophosphohydrolase (Leptothrix cholodnii (strain ATCC 51168 / LMG 8142 / SP-6) (Leptothrix discophora (strain SP-6))).